Consider the following 163-residue polypeptide: Nucleotide-binding protein YajQ (163 aa).

It belongs to the YajQ family.

Nucleotide-binding protein. The chain is Nucleotide-binding protein YajQ from Escherichia coli O127:H6 (strain E2348/69 / EPEC).